We begin with the raw amino-acid sequence, 636 residues long: Chaperone protein HtpG (636 aa).

The segment at 1-344 (MTMSVETQKE…SNDLSLNVSR (344 aa)) is a; substrate-binding. The interval 345 to 561 (EILQKDPIID…EQDLGMQMRQ (217 aa)) is b. The segment at 562-636 (ILEASGQKVP…LNKLLVELSV (75 aa)) is c.

This sequence belongs to the heat shock protein 90 family. In terms of assembly, homodimer.

The protein localises to the cytoplasm. Molecular chaperone. Has ATPase activity. In Pseudomonas fluorescens (strain SBW25), this protein is Chaperone protein HtpG.